A 252-amino-acid polypeptide reads, in one-letter code: Triosephosphate isomerase (252 aa).

10-12 is a substrate binding site; sequence NWK. H96 functions as the Electrophile in the catalytic mechanism. The active-site Proton acceptor is the E168. Residues G174, S214, and 235–236 contribute to the substrate site; that span reads GG.

It belongs to the triosephosphate isomerase family. In terms of assembly, homodimer.

It localises to the cytoplasm. The catalysed reaction is D-glyceraldehyde 3-phosphate = dihydroxyacetone phosphate. It functions in the pathway carbohydrate biosynthesis; gluconeogenesis. Its pathway is carbohydrate degradation; glycolysis; D-glyceraldehyde 3-phosphate from glycerone phosphate: step 1/1. In terms of biological role, involved in the gluconeogenesis. Catalyzes stereospecifically the conversion of dihydroxyacetone phosphate (DHAP) to D-glyceraldehyde-3-phosphate (G3P). This Streptococcus mutans serotype c (strain ATCC 700610 / UA159) protein is Triosephosphate isomerase.